Consider the following 177-residue polypeptide: Phycocyanin-645 beta chain (177 aa).

Tyrosine 18 contacts mesobiliverdin. (2R,3E)-phycocyanobilin is bound by residues lysine 28, asparagine 35, and aspartate 39. Cysteine 50, aspartate 54, and cysteine 61 together coordinate 15,16-dihydrobiliverdin. Positions 77, 82, 84, and 85 each coordinate (2R,3E)-phycocyanobilin. 15,16-dihydrobiliverdin is bound at residue glutamine 148. Proline 154, glycine 156, and cysteine 158 together coordinate (2R,3E)-phycocyanobilin.

It belongs to the phycobiliprotein family. In terms of assembly, heterotetramer of 2 different alpha chains and 2 identical beta chains which form 2 alpha-beta heterodimers within the heterotetramer. Contains two phycocyanobilin chromophores, one mesobiliverdin chromophore and one 15,16-dihydrobiliverdin chromophore with binding mediated by both the alpha and beta subunits.

It localises to the plastid. The protein localises to the chloroplast thylakoid membrane. Its function is as follows. Light-harvesting photosynthetic tetrapyrrole chromophore-protein from the phycobiliprotein complex. The polypeptide is Phycocyanin-645 beta chain (Chroomonas sp).